A 341-amino-acid polypeptide reads, in one-letter code: Serine/threonine-protein kinase-like protein At5g23170 (341 aa).

The Protein kinase domain occupies 16–298 (FSPSKLIGKG…FGEITAEIVA (283 aa)). Residues 22–30 (IGKGSHGYV) and lysine 51 contribute to the ATP site. Residues 52–75 (TPSSLSPSSPSSSSSSKSEQTKKL) form a disordered region. Positions 53–69 (PSSLSPSSPSSSSSSKS) are enriched in low complexity. Aspartate 153 functions as the Proton acceptor in the catalytic mechanism. The stretch at 311 to 332 (MSVLRRVVKLKRRKKRLRETLT) forms a coiled coil.

The protein belongs to the protein kinase superfamily. Ser/Thr protein kinase family. As to expression, ubiquitous. Higher expression in mature stamina and pollen.

The enzyme catalyses L-seryl-[protein] + ATP = O-phospho-L-seryl-[protein] + ADP + H(+). It catalyses the reaction L-threonyl-[protein] + ATP = O-phospho-L-threonyl-[protein] + ADP + H(+). In Arabidopsis thaliana (Mouse-ear cress), this protein is Serine/threonine-protein kinase-like protein At5g23170.